A 419-amino-acid chain; its full sequence is Gamma-glutamyl phosphate reductase (419 aa).

Belongs to the gamma-glutamyl phosphate reductase family.

The protein resides in the cytoplasm. The enzyme catalyses L-glutamate 5-semialdehyde + phosphate + NADP(+) = L-glutamyl 5-phosphate + NADPH + H(+). Its pathway is amino-acid biosynthesis; L-proline biosynthesis; L-glutamate 5-semialdehyde from L-glutamate: step 2/2. Its function is as follows. Catalyzes the NADPH-dependent reduction of L-glutamate 5-phosphate into L-glutamate 5-semialdehyde and phosphate. The product spontaneously undergoes cyclization to form 1-pyrroline-5-carboxylate. The polypeptide is Gamma-glutamyl phosphate reductase (Yersinia pseudotuberculosis serotype O:1b (strain IP 31758)).